A 339-amino-acid chain; its full sequence is DNA-directed RNA polymerase subunit alpha (339 aa).

Residues M1–E235 are alpha N-terminal domain (alpha-NTD). The interval F251–Y339 is alpha C-terminal domain (alpha-CTD).

Belongs to the RNA polymerase alpha chain family. Homodimer. The RNAP catalytic core consists of 2 alpha, 1 beta, 1 beta' and 1 omega subunit. When a sigma factor is associated with the core the holoenzyme is formed, which can initiate transcription.

The catalysed reaction is RNA(n) + a ribonucleoside 5'-triphosphate = RNA(n+1) + diphosphate. Its function is as follows. DNA-dependent RNA polymerase catalyzes the transcription of DNA into RNA using the four ribonucleoside triphosphates as substrates. The protein is DNA-directed RNA polymerase subunit alpha of Methylobacterium nodulans (strain LMG 21967 / CNCM I-2342 / ORS 2060).